A 184-amino-acid polypeptide reads, in one-letter code: Adenine phosphoribosyltransferase (184 aa).

Belongs to the purine/pyrimidine phosphoribosyltransferase family. Homodimer.

Its subcellular location is the cytoplasm. The enzyme catalyses AMP + diphosphate = 5-phospho-alpha-D-ribose 1-diphosphate + adenine. Its pathway is purine metabolism; AMP biosynthesis via salvage pathway; AMP from adenine: step 1/1. Functionally, catalyzes a salvage reaction resulting in the formation of AMP, that is energically less costly than de novo synthesis. In Mycobacterium marinum (strain ATCC BAA-535 / M), this protein is Adenine phosphoribosyltransferase.